The chain runs to 115 residues: U3-lycotoxin-Ls1a (115 aa).

The first 20 residues, 1–20, serve as a signal peptide directing secretion; that stretch reads MKFVLLFGVFLVTLFSYSSA. Positions 21-44 are excised as a propeptide; the sequence is EMLDDFGQADEDELLSLIEKEEAR. Cystine bridges form between Cys-48/Cys-63, Cys-55/Cys-72, Cys-62/Cys-87, and Cys-74/Cys-85.

This sequence belongs to the neurotoxin 19 (CSTX) family. 01 subfamily. In terms of tissue distribution, expressed by the venom gland.

It is found in the secreted. The sequence is that of U3-lycotoxin-Ls1a from Lycosa singoriensis (Wolf spider).